A 738-amino-acid polypeptide reads, in one-letter code: Pentatricopeptide repeat-containing protein At5g65570 (738 aa).

13 PPR repeats span residues 98 to 128, 129 to 163, 164 to 198, 200 to 230, 231 to 265, 266 to 300, 301 to 331, 332 to 366, 367 to 401, 402 to 432, 433 to 467, 468 to 502, and 503 to 537; these read AEISGSKLVDASLKCGDIDYARQVFDGMSER, HIVTWNSLIAYLIKHRRSKEAVEMYRLMITNNVLP, DEYTLSSVFKAFSDLSLEKEAQRSHGLAVILGLEV, NVFVGSALVDMYVKFGKTREAKLVLDRVEEK, DVVLITALIVGYSQKGEDTEAVKAFQSMLVEKVQP, NEYTYASVLISCGNLKDIGNGKLIHGLMVKSGFES, ALASQTSLLTMYLRCSLVDDSLRVFKCIEYP, NQVSWTSLISGLVQNGREEMALIEFRKMMRDSIKP, NSFTLSSALRGCSNLAMFEEGRQIHGIVTKYGFDR, DKYAGSGLIDLYGKCGCSDMARLVFDTLSEV, DVISLNTMIYSYAQNGFGREALDLFERMINLGLQP, NDVTVLSVLLACNNSRLVEEGCELFDSFRKDKIML, and TNDHYACMVDLLGRAGRLEEAEMLTTEVINPDLVL. A type E motif region spans residues 537–612; the sequence is LWRTLLSACK…NPAMSWVEIN (76 aa). The segment at 613-644 is type E(+) motif; sequence KETHTFMAGDLFSHPNSEQILENLEELIKKSK. The interval 645 to 738 is type DYW motif; that stretch reads DLGYVEDKSC…DGSCSCGDYW (94 aa).

It belongs to the PPR family. PCMP-H subfamily.

The sequence is that of Pentatricopeptide repeat-containing protein At5g65570 (PCMP-H47) from Arabidopsis thaliana (Mouse-ear cress).